Consider the following 185-residue polypeptide: Ribosome-recycling factor (185 aa).

The protein belongs to the RRF family.

The protein resides in the cytoplasm. Responsible for the release of ribosomes from messenger RNA at the termination of protein biosynthesis. May increase the efficiency of translation by recycling ribosomes from one round of translation to another. The polypeptide is Ribosome-recycling factor (Citrifermentans bemidjiense (strain ATCC BAA-1014 / DSM 16622 / JCM 12645 / Bem) (Geobacter bemidjiensis)).